The following is a 410-amino-acid chain: Transcription factor Dp-1 (410 aa).

At Lys3 the chain carries N6-acetyllysine. Position 23 is a phosphoserine (Ser23). Over residues 73–100 the composition is skewed to polar residues; sequence SNTLVVGSPHTPSTHFASQNQPSDSSPW. A disordered region spans residues 73-116; that stretch reads SNTLVVGSPHTPSTHFASQNQPSDSSPWSAGKRNRKGEKNGKGL. Positions 104–116 are enriched in basic residues; it reads KRNRKGEKNGKGL. The interaction with CEBPA stretch occupies residues 105–127; that stretch reads RNRKGEKNGKGLRHFSMKVCEKV. A DNA-binding region spans residues 113 to 195; it reads GKGLRHFSMK…KKEIKWIGLP (83 aa). A DEF box motif is present at residues 161-195; that stretch reads DQKNIRRRVYDALNVLMAMNIISKEKKEIKWIGLP. Positions 204–277 are dimerization; the sequence is NLEVERQRRL…KKTVIDCSIS (74 aa). Residues 211–327 are enhances binding of RB protein to E2F; that stretch reads RRLERIKQKQ…DLKMARSLVP (117 aa). A DCB1 region spans residues 214 to 246; sequence ERIKQKQSQLQELILQQIAFKNLVQRNRHAEQQ. The tract at residues 259–315 is DCB2; sequence LPFIIVNTSKKTVIDCSISNDKFEYLFNFDNTFEIHDDIEVLKRMGMACGLESGSCS. Residues 370 to 410 are disordered; that stretch reads GMLATSSNGSQYSGSRVETPVSYVGEDDEEDDDFNENDEDD. Residues 373-385 are compositionally biased toward polar residues; sequence ATSSNGSQYSGSR. The span at 394–410 shows a compositional bias: acidic residues; it reads GEDDEEDDDFNENDEDD.

This sequence belongs to the E2F/DP family. As to quaternary structure, component of the E2F:DP transcription factor complex. Forms heterodimers with E2F family members. The complex can interact with hypophosphorylated retinoblastoma protein RB1 and related proteins (RBL1 and RBL2) that inhibit the E2F transactivation domain. This repression involves recruitment of histone deacetylase (HDAC). During the cell cycle, from mid-to-late G1 phase, RB family members become phosphorylated, detach from the DRTF1/E2F complex to render E2F transcriptionally active. Viral oncoproteins, notably E1A, T-antigen and HPV E7, are capable of sequestering RB protein, thus releasing the active complex. Part of the E2F6.com-1 complex in G0 phase is composed of E2F6, MGA, MAX, TFDP1, CBX3, BAT8, EUHMTASE1, RING1, RNF2, MBLR, L3MBTL2 YAF2. Component of the DREAM complex (also named LINC complex) at least composed of E2F4, E2F5, LIN9, LIN37, LIN52, LIN54, MYBL1, MYBL2, RBL1, RBL2, RBBP4, TFDP1 and TFDP2. The complex exists in quiescent cells where it represses cell cycle-dependent genes. It dissociates in S phase when LIN9, LIN37, LIN52 and LIN54 form a subcomplex that binds to MYBL2. The complex TFDP1:E2F1 interacts with CEBPA; the interaction prevents CEBPA binding to target gene promoters and represses its transcriptional activity. Phosphorylation by E2F1-bound cyclin A-CDK2, in the S phase, inhibits E2F-mediated DNA binding and transactivation. In terms of processing, ubiquitinated by the BCR(KBTBD5) complex, leading to its subsequent degradation. Highest levels in muscle. Also expressed in brain, placenta, liver and kidney. Lower levels in lung and pancreas. Not detected in heart.

The protein resides in the nucleus. Its subcellular location is the cytoplasm. Can stimulate E2F-dependent transcription. Binds DNA cooperatively with E2F family members through the E2 recognition site, 5'-TTTC[CG]CGC-3', found in the promoter region of a number of genes whose products are involved in cell cycle regulation or in DNA replication. The E2F1:DP complex appears to mediate both cell proliferation and apoptosis. Blocks adipocyte differentiation by repressing CEBPA binding to its target gene promoters. The polypeptide is Transcription factor Dp-1 (TFDP1) (Homo sapiens (Human)).